Here is a 44-residue protein sequence, read N- to C-terminus: Capsid protein G8P (44 aa).

Topologically, residues methionine 1–aspartate 18 are periplasmic. A helical transmembrane segment spans residues isoleucine 19 to isoleucine 39. Over lysine 40 to phenylalanine 44 the chain is Cytoplasmic.

The protein belongs to the inovirus capsid protein family. In terms of assembly, homomultimerizes. There are several thousand copies of this protein in the phage capsid.

It localises to the virion. The protein resides in the host cell inner membrane. In terms of biological role, self assembles to form a helical capsid wrapping up the viral genomic DNA. The capsid displays a filamentous structure with a length of 760-1950 nm and a width of 6-8 nm. The virion assembly and budding take place at the host inner membrane. In Pseudomonas aeruginosa (Bacteriophage Pf3), this protein is Capsid protein G8P (VIII).